The primary structure comprises 193 residues: UPF0215 protein PH0071 (193 aa).

Belongs to the UPF0215 family.

This is UPF0215 protein PH0071 from Pyrococcus horikoshii (strain ATCC 700860 / DSM 12428 / JCM 9974 / NBRC 100139 / OT-3).